We begin with the raw amino-acid sequence, 209 residues long: A-type ATP synthase subunit D (209 aa).

The protein belongs to the V-ATPase D subunit family. In terms of assembly, has multiple subunits with at least A(3), B(3), C, D, E, F, H, I and proteolipid K(x).

It localises to the cell membrane. Its function is as follows. Component of the A-type ATP synthase that produces ATP from ADP in the presence of a proton gradient across the membrane. This chain is A-type ATP synthase subunit D, found in Methanoregula boonei (strain DSM 21154 / JCM 14090 / 6A8).